A 535-amino-acid chain; its full sequence is Peptide chain release factor 3 (535 aa).

The 271-residue stretch at 8–278 (ARRRTFAIIS…VDQAPAPGPR (271 aa)) folds into the tr-type G domain. GTP is bound by residues 17–24 (SHPDAGKT), 85–89 (DTPGH), and 139–142 (NKLD).

Belongs to the TRAFAC class translation factor GTPase superfamily. Classic translation factor GTPase family. PrfC subfamily.

It is found in the cytoplasm. Functionally, increases the formation of ribosomal termination complexes and stimulates activities of RF-1 and RF-2. It binds guanine nucleotides and has strong preference for UGA stop codons. It may interact directly with the ribosome. The stimulation of RF-1 and RF-2 is significantly reduced by GTP and GDP, but not by GMP. This is Peptide chain release factor 3 from Bordetella bronchiseptica (strain ATCC BAA-588 / NCTC 13252 / RB50) (Alcaligenes bronchisepticus).